Here is a 324-residue protein sequence, read N- to C-terminus: MQALLLEQQDGKTLASVQTLDESRLPEGDVTVDVHWSSLNYKDALAITGKGKIIRNFPMIPGIDFAGTVRTSEDPRFHAGQEVLLTGWGVGENHWGGLAEQARVKGDWLVAMPQGLDARKAMIIGTAGFTAMLCVMALEDAGVRPQDGEIVVTGASGGVGSTAVALLHKLGYQVVAVSGRESTHEYLKSLGASRVLPRDEFAESRPLEKQVWAGAIDTVGDKVLAKVLAQMNYGGCVAACGLAGGFTLPTTVMPFILRNVRLQGVDSVMTPPERRAQAWQRLVADLPESFYTQAAKEISLSEAPNFAEAIINNQIQGRTLVKVN.

Residues Y41, 156-159 (SGGV), 178-180 (SGR), R198, L242, I256, S267, and N313 each bind NADP(+).

Belongs to the zinc-containing alcohol dehydrogenase family. Acrylyl-CoA reductase subfamily. In terms of assembly, homodimer.

It is found in the cytoplasm. It catalyses the reaction propanoyl-CoA + NADP(+) = acryloyl-CoA + NADPH + H(+). In terms of biological role, probably catalyzes the NADPH-dependent reduction of acrylyl-CoA to propanoyl-CoA. The polypeptide is Probable acrylyl-CoA reductase AcuI (acuI) (Escherichia coli (strain K12)).